Reading from the N-terminus, the 115-residue chain is Large ribosomal subunit protein bL20c (115 aa).

Belongs to the bacterial ribosomal protein bL20 family.

It localises to the plastid. Its subcellular location is the chloroplast. Its function is as follows. Binds directly to 23S ribosomal RNA and is necessary for the in vitro assembly process of the 50S ribosomal subunit. It is not involved in the protein synthesizing functions of that subunit. The chain is Large ribosomal subunit protein bL20c from Nymphaea alba (White water-lily).